We begin with the raw amino-acid sequence, 89 residues long: Small ribosomal subunit protein uS15 (89 aa).

It belongs to the universal ribosomal protein uS15 family. As to quaternary structure, part of the 30S ribosomal subunit. Forms a bridge to the 50S subunit in the 70S ribosome, contacting the 23S rRNA.

Functionally, one of the primary rRNA binding proteins, it binds directly to 16S rRNA where it helps nucleate assembly of the platform of the 30S subunit by binding and bridging several RNA helices of the 16S rRNA. In terms of biological role, forms an intersubunit bridge (bridge B4) with the 23S rRNA of the 50S subunit in the ribosome. The sequence is that of Small ribosomal subunit protein uS15 from Streptococcus mutans serotype c (strain ATCC 700610 / UA159).